The sequence spans 124 residues: uncharacterized protein (124 aa).

Disordered regions lie at residues 1–31 (MAQH…TMKP) and 59–124 (EDAR…YPQP). 2 stretches are compositionally biased toward polar residues: residues 65-86 (GMSS…SDAA) and 98-124 (TGEQ…YPQP).

This is an uncharacterized protein from Bos taurus (Bovine).